The chain runs to 137 residues: Small ribosomal subunit protein uS9 (137 aa).

The interval 100 to 137 is disordered; that stretch reads ENRPPLKSEGYLTRDPRAKERKKYGLHKARKAPQYSKR. Over residues 118–137 the composition is skewed to basic residues; that stretch reads KERKKYGLHKARKAPQYSKR.

The protein belongs to the universal ribosomal protein uS9 family.

The polypeptide is Small ribosomal subunit protein uS9 (Microcystis aeruginosa (strain NIES-843 / IAM M-2473)).